A 379-amino-acid polypeptide reads, in one-letter code: RNA-splicing ligase RtcB2 (379 aa).

Residues Asp74, Cys77, His137, His168, and His239 each contribute to the Mn(2+) site. 136–140 (NHFVE) contacts GMP. GMP-binding positions include 239–240 (HN), Ser277, 294–297 (HGAG), and Lys372. Residue His294 is the GMP-histidine intermediate of the active site.

Belongs to the RtcB family. RtcB2 subfamily. Requires Mn(2+) as cofactor.

It catalyses the reaction a 3'-end 3'-phospho-ribonucleotide-RNA + a 5'-end dephospho-ribonucleoside-RNA + GTP = a ribonucleotidyl-ribonucleotide-RNA + GMP + diphosphate. Functionally, GTP-dependent RNA ligase involved in rRNA repair. Repairs damaged 16S rRNA in 30S subunits that has been cleaved between adenine-1493 and guanosine-1494 (E.coli nubering). This specific cleavage is inflicted by CdiA (ECL_04451) or by colicin E3-type (ColE3) proteins. Poorly repairs damaged rRNA in the 70S ribosome; addition of release factor PrfH improves repair about 3-fold in vitro, probably because PrfH hydrolyzes the nascent chain allowing ribosomal subunit dissociation. In vivo the PrfH-RtcB2 pair restores growth in the presence of ribotoxins that specifically create this damage. Does not repair damaged tRNA (tested with tRNA(Asp) and tRNA(Arg)). This Escherichia coli (strain ATCC 25922 / DSM 1103 / LMG 8223 / NCIMB 12210 / NCTC 12241 / WDCM 00013 / Seattle 1946) protein is RNA-splicing ligase RtcB2.